Reading from the N-terminus, the 103-residue chain is MSDCYTELEKAVIVLVENFYKYVSKYSLVKNKISKSSFREMLQKELNHMLSDTGNRKAADKLIQNLDANHDGRISFDEYWTLIGGITGPIAKLIHEQEQQSSS.

Residues 12–47 form the EF-hand 1; degenerate domain; it reads VIVLVENFYKYVSKYSLVKNKISKSSFREMLQKELN. An EF-hand 2 domain is found at 54–89; it reads GNRKAADKLIQNLDANHDGRISFDEYWTLIGGITGP. Ca(2+)-binding residues include D67, N69, D71, R73, and E78.

The protein belongs to the S-100 family. As to quaternary structure, homodimer. Interacts with TP53. In terms of tissue distribution, ubiquitous. Highly expressed in esophagus, adipose tissues and colon. Expressed at lower level in lung, brain, pancreas and skeletal muscle. Expression is up-regulated in tumors of bladder, lung, thyroid gland, pancreas and ovary. Expressed in astrocytes.

It is found in the nucleus. Its subcellular location is the nucleolus. The protein resides in the cytoplasm. In terms of biological role, calcium-binding protein. Binds one calcium ion per monomer. Can promote differentiation of adipocytes (in vitro). Overexpression in preadipocytes increases their proliferation, enhances adipogenesis and reduces insulin-stimulated glucose uptake. This Homo sapiens (Human) protein is Protein S100-A16.